The chain runs to 152 residues: Deoxyuridine 5'-triphosphate nucleotidohydrolase (152 aa).

Substrate is bound by residues 71–73, asparagine 84, 88–90, and methionine 98; these read RSG and LID.

It belongs to the dUTPase family. It depends on Mg(2+) as a cofactor.

The catalysed reaction is dUTP + H2O = dUMP + diphosphate + H(+). Its pathway is pyrimidine metabolism; dUMP biosynthesis; dUMP from dCTP (dUTP route): step 2/2. In terms of biological role, this enzyme is involved in nucleotide metabolism: it produces dUMP, the immediate precursor of thymidine nucleotides and it decreases the intracellular concentration of dUTP so that uracil cannot be incorporated into DNA. The protein is Deoxyuridine 5'-triphosphate nucleotidohydrolase of Pectobacterium carotovorum subsp. carotovorum (strain PC1).